A 159-amino-acid chain; its full sequence is Ribosome maturation factor RimP (159 aa).

The protein belongs to the RimP family.

The protein localises to the cytoplasm. In terms of biological role, required for maturation of 30S ribosomal subunits. In Lacticaseibacillus casei (strain BL23) (Lactobacillus casei), this protein is Ribosome maturation factor RimP.